The chain runs to 129 residues: Protein PerB (129 aa).

Functionally, positive regulatory protein of bfpA, the gene coding for the bundle-forming pilus of EPEC. The polypeptide is Protein PerB (perB) (Escherichia coli O111:H-).